A 648-amino-acid polypeptide reads, in one-letter code: DNA mismatch repair protein MutL (648 aa).

The disordered stretch occupies residues 385–430 (STVKGPAVNEPLTENTLNQQKVKTSASTPVVHTGNSVEPKPETSTA). The segment covering 396 to 430 (LTENTLNQQKVKTSASTPVVHTGNSVEPKPETSTA) has biased composition (polar residues).

Belongs to the DNA mismatch repair MutL/HexB family.

Its function is as follows. This protein is involved in the repair of mismatches in DNA. It is required for dam-dependent methyl-directed DNA mismatch repair. May act as a 'molecular matchmaker', a protein that promotes the formation of a stable complex between two or more DNA-binding proteins in an ATP-dependent manner without itself being part of a final effector complex. In Agathobacter rectalis (strain ATCC 33656 / DSM 3377 / JCM 17463 / KCTC 5835 / VPI 0990) (Eubacterium rectale), this protein is DNA mismatch repair protein MutL.